The chain runs to 110 residues: Ig lambda-1 chain V region S178 (110 aa).

Positions 1 to 106 constitute an Ig-like domain; sequence QAVVTQESAL…RWVFGGGTKL (106 aa).

The polypeptide is Ig lambda-1 chain V region S178 (Mus musculus (Mouse)).